The primary structure comprises 374 residues: Alcohol dehydrogenase class-3 (374 aa).

Ala2 carries the post-translational modification N-acetylalanine. Zn(2+) contacts are provided by Cys45, His67, Cys97, Cys100, Cys103, Cys111, and Cys174. Lys233 carries the post-translational modification N6-succinyllysine. Ser247 is subject to Phosphoserine. Lys315 is subject to N6-succinyllysine. Ser324 is subject to Phosphoserine.

It belongs to the zinc-containing alcohol dehydrogenase family. Class-III subfamily. Homodimer. Requires Zn(2+) as cofactor.

The protein resides in the cytoplasm. It catalyses the reaction a primary alcohol + NAD(+) = an aldehyde + NADH + H(+). It carries out the reaction a secondary alcohol + NAD(+) = a ketone + NADH + H(+). The enzyme catalyses S-(hydroxymethyl)glutathione + NADP(+) = S-formylglutathione + NADPH + H(+). The catalysed reaction is S-(hydroxymethyl)glutathione + NAD(+) = S-formylglutathione + NADH + H(+). It catalyses the reaction 20-oxo-(5Z,8Z,11Z,14Z)-eicosatetraenoate + NAD(+) + H2O = (5Z,8Z,11Z,14Z)-eicosatetraenedioate + NADH + 2 H(+). It carries out the reaction 20-hydroxy-(5Z,8Z,11Z,14Z)-eicosatetraenoate + NAD(+) = 20-oxo-(5Z,8Z,11Z,14Z)-eicosatetraenoate + NADH + H(+). The enzyme catalyses S-nitrosoglutathione + NADH + H(+) = S-(hydroxysulfenamide)glutathione + NAD(+). In terms of biological role, catalyzes the oxidation of long-chain primary alcohols and the oxidation of S-(hydroxymethyl) glutathione. Also oxidizes long chain omega-hydroxy fatty acids, such as 20-HETE, producing both the intermediate aldehyde, 20-oxoarachidonate and the end product, a dicarboxylic acid, (5Z,8Z,11Z,14Z)-eicosatetraenedioate. Class-III ADH is remarkably ineffective in oxidizing ethanol. Required for clearance of cellular formaldehyde, a cytotoxic and carcinogenic metabolite that induces DNA damage. Also acts as a S-nitroso-glutathione reductase by catalyzing the NADH-dependent reduction of S-nitrosoglutathione, thereby regulating protein S-nitrosylation. The sequence is that of Alcohol dehydrogenase class-3 from Bos taurus (Bovine).